Here is a 465-residue protein sequence, read N- to C-terminus: Argininosuccinate lyase (465 aa).

This sequence belongs to the lyase 1 family. Argininosuccinate lyase subfamily.

Its subcellular location is the cytoplasm. It carries out the reaction 2-(N(omega)-L-arginino)succinate = fumarate + L-arginine. Its pathway is amino-acid biosynthesis; L-arginine biosynthesis; L-arginine from L-ornithine and carbamoyl phosphate: step 3/3. In Rhodopseudomonas palustris (strain HaA2), this protein is Argininosuccinate lyase.